The following is a 211-amino-acid chain: Small ribosomal subunit protein eS1 (211 aa).

Residues 192 to 211 (NGLPPYEAVGDRATPELASY) form a disordered region.

This sequence belongs to the eukaryotic ribosomal protein eS1 family.

The protein is Small ribosomal subunit protein eS1 of Methanopyrus kandleri (strain AV19 / DSM 6324 / JCM 9639 / NBRC 100938).